A 251-amino-acid polypeptide reads, in one-letter code: 3-deoxy-manno-octulosonate cytidylyltransferase (251 aa).

This sequence belongs to the KdsB family.

The protein localises to the cytoplasm. It carries out the reaction 3-deoxy-alpha-D-manno-oct-2-ulosonate + CTP = CMP-3-deoxy-beta-D-manno-octulosonate + diphosphate. It functions in the pathway nucleotide-sugar biosynthesis; CMP-3-deoxy-D-manno-octulosonate biosynthesis; CMP-3-deoxy-D-manno-octulosonate from 3-deoxy-D-manno-octulosonate and CTP: step 1/1. The protein operates within bacterial outer membrane biogenesis; lipopolysaccharide biosynthesis. Its function is as follows. Activates KDO (a required 8-carbon sugar) for incorporation into bacterial lipopolysaccharide in Gram-negative bacteria. This chain is 3-deoxy-manno-octulosonate cytidylyltransferase, found in Chlorobium luteolum (strain DSM 273 / BCRC 81028 / 2530) (Pelodictyon luteolum).